A 168-amino-acid chain; its full sequence is T-cell surface glycoprotein CD3 delta chain (168 aa).

The first 21 residues, 1–21 (MEHSRFLSCLILAALLSQVNP), serve as a signal peptide directing secretion. Topologically, residues 22–102 (RILKVLEPED…CVELDTATLA (81 aa)) are extracellular. Cysteine 37 and cysteine 74 are joined by a disulfide. Asparagine 38 and asparagine 56 each carry an N-linked (GlcNAc...) asparagine glycan. Residues 103 to 123 (GMIITDIIATVLLALGVYCFA) traverse the membrane as a helical segment. The Cytoplasmic segment spans residues 124–168 (GHETGRFSRAADTQALMGNDQLYQPLRERNDAQYSRLGDKWARNK). The 29-residue stretch at 135 to 163 (DTQALMGNDQLYQPLRERNDAQYSRLGDK) folds into the ITAM domain. Tyrosine 146 and tyrosine 157 each carry phosphotyrosine.

As to quaternary structure, the TCR-CD3 complex is composed of a CD3D/CD3E and a CD3G/CD3E heterodimers that preferentially associate with TCRalpha and TCRbeta, respectively, to form TCRalpha/CD3E/CD3G and TCRbeta/CD3G/CD3E trimers. In turn, the hexamer interacts with CD3Z homodimer to form the TCR-CD3 complex. Alternatively, TCRalpha and TCRbeta can be replaced by TCRgamma and TCRdelta. Interacts with coreceptors CD4 and CD8. Post-translationally, phosphorylated on Tyr residues after T-cell receptor triggering by LCK in association with CD4/CD8. In terms of tissue distribution, CD3D is mostly present on T-lymphocytes with its TCR-CD3 partners. Present also in fetal NK-cells.

The protein resides in the cell membrane. Its function is as follows. Part of the TCR-CD3 complex present on T-lymphocyte cell surface that plays an essential role in adaptive immune response. When antigen presenting cells (APCs) activate T-cell receptor (TCR), TCR-mediated signals are transmitted across the cell membrane by the CD3 chains CD3D, CD3E, CD3G and CD3Z. All CD3 chains contain immunoreceptor tyrosine-based activation motifs (ITAMs) in their cytoplasmic domain. Upon TCR engagement, these motifs become phosphorylated by Src family protein tyrosine kinases LCK and FYN, resulting in the activation of downstream signaling pathways. In addition of this role of signal transduction in T-cell activation, CD3D plays an essential role in thymocyte differentiation. Indeed, participates in correct intracellular TCR-CD3 complex assembly and surface expression. In absence of a functional TCR-CD3 complex, thymocytes are unable to differentiate properly. Interacts with CD4 and CD8 and thus serves to establish a functional link between the TCR and coreceptors CD4 and CD8, which is needed for activation and positive selection of CD4 or CD8 T-cells. This chain is T-cell surface glycoprotein CD3 delta chain (CD3D), found in Bos taurus (Bovine).